The sequence spans 125 residues: Period circadian protein (125 aa).

The segment at 1–125 is disordered; the sequence is EGSGGSGSSG…VTLTESLLNK (125 aa). 3 consecutive repeat copies span residues 30–31, 33–34, and 35–36. A compositionally biased stretch (gly residues) spans 30–84; it reads GTGGTGTNTGTNTGTGTGTGTGTGTGTGTGTGTGTGTGTGTGTGTGTGKGAGAGT. Residues 30-86 are 28 X 2 AA approximate tandem repeats of G-[TA]; sequence GTGGTGTNTGTNTGTGTGTGTGTGTGTGTGTGTGTGTGTGTGTGTGTGKGAGAGTGT. Residues 37–38 form a 4; approximate repeat; the sequence is NT. Repeat 5 spans residues 39–40; the sequence is GT. The stretch at 41 to 42 is one 6; approximate repeat; that stretch reads NT. A run of 17 repeats spans residues 43–44, 45–46, 47–48, 49–50, 51–52, 53–54, 55–56, 57–58, 59–60, 61–62, 63–64, 65–66, 67–68, 69–70, 71–72, 73–74, and 75–76. The stretch at 77–78 is one 24; approximate repeat; that stretch reads GK. Tandem repeats lie at residues 79–80, 81–82, 83–84, and 85–86. Over residues 85 to 112 the composition is skewed to low complexity; it reads GTATNETAGPGTTTTTTTRSTTTAATAA. The span at 116–125 shows a compositional bias: polar residues; the sequence is VTLTESLLNK.

As to quaternary structure, forms a heterodimer with timeless (TIM); the complex then translocates into the nucleus. In terms of processing, phosphorylated with a circadian rhythmicity, probably by the double-time protein (dbt). Phosphorylation could be implicated in the stability of per monomer and in the formation of heterodimer per-tim.

The protein resides in the nucleus. It is found in the cytoplasm. It localises to the perinuclear region. Its function is as follows. Essential for biological clock functions. Determines the period length of circadian and ultradian rhythms; an increase in PER dosage leads to shortened circadian rhythms and a decrease leads to lengthened circadian rhythms. Essential for the circadian rhythmicity of locomotor activity, eclosion behavior, and for the rhythmic component of the male courtship song that originates in the thoracic nervous system. The biological cycle depends on the rhythmic formation and nuclear localization of the TIM-PER complex. Light induces the degradation of TIM, which promotes elimination of PER. Nuclear activity of the heterodimer coordinatively regulates PER and TIM transcription through a negative feedback loop. Behaves as a negative element in circadian transcriptional loop. Does not appear to bind DNA, suggesting indirect transcriptional inhibition. This is Period circadian protein (per) from Drosophila ananassae (Fruit fly).